The following is a 334-amino-acid chain: Glyceraldehyde-3-phosphate dehydrogenase B (334 aa).

NAD(+)-binding positions include 12-13 (RI), Asp34, and Ser121. Residues 149–151 (SCT), Thr180, 209–210 (TG), and Arg232 each bind D-glyceraldehyde 3-phosphate. Cys150 functions as the Nucleophile in the catalytic mechanism. Asn314 contacts NAD(+).

Belongs to the glyceraldehyde-3-phosphate dehydrogenase family. As to quaternary structure, homotetramer.

The enzyme catalyses D-glyceraldehyde 3-phosphate + phosphate + NAD(+) = (2R)-3-phospho-glyceroyl phosphate + NADH + H(+). The protein operates within carbohydrate degradation; glycolysis; pyruvate from D-glyceraldehyde 3-phosphate: step 1/5. Its function is as follows. Glyceraldehyde-3-phosphate dehydrogenase; part of the gene cluster that mediates the biosynthesis of heptelidic acid (HA), a sesquiterpene lactone that acts as an inhibitor of glyceraldehyde-3-phosphatedehydrogenase (GAPDH) and a growth inhibitor of the salt-tolerant lactic acid bacteria in soy sauce brewing. The GAPDPH hepG/gdpB shows much higher resistance to HA than the GAPDH gpdA located outside of the cluster, but it does not seem to act in self-resistance. In Aspergillus oryzae (strain ATCC 42149 / RIB 40) (Yellow koji mold), this protein is Glyceraldehyde-3-phosphate dehydrogenase B.